The chain runs to 513 residues: Putative ribose/galactose/methyl galactoside import ATP-binding protein (513 aa).

2 consecutive ABC transporter domains span residues 24–260 (LSAE…VGRE) and 270–510 (VPIG…VMEL). Position 56 to 63 (56 to 63 (GENGAGKS)) interacts with ATP.

Belongs to the ABC transporter superfamily. Carbohydrate importer 2 (CUT2) (TC 3.A.1.2) family.

It is found in the cell inner membrane. The enzyme catalyses D-ribose(out) + ATP + H2O = D-ribose(in) + ADP + phosphate + H(+). It carries out the reaction D-galactose(out) + ATP + H2O = D-galactose(in) + ADP + phosphate + H(+). Its function is as follows. Part of an ABC transporter complex involved in carbohydrate import. Could be involved in ribose, galactose and/or methyl galactoside import. Responsible for energy coupling to the transport system. In Rhizobium johnstonii (strain DSM 114642 / LMG 32736 / 3841) (Rhizobium leguminosarum bv. viciae), this protein is Putative ribose/galactose/methyl galactoside import ATP-binding protein.